The primary structure comprises 211 residues: 3-demethoxyubiquinol 3-hydroxylase (211 aa).

Residues 22–43 are disordered; sequence KHPLNPNRKSPSANTVDGQLSD. Over residues 28–42 the composition is skewed to polar residues; the sequence is NRKSPSANTVDGQLS. Fe cation contacts are provided by E60, E90, H93, E142, E174, and H177.

It belongs to the COQ7 family. Fe cation serves as cofactor.

The protein localises to the cell membrane. It carries out the reaction a 5-methoxy-2-methyl-3-(all-trans-polyprenyl)benzene-1,4-diol + AH2 + O2 = a 3-demethylubiquinol + A + H2O. The protein operates within cofactor biosynthesis; ubiquinone biosynthesis. Its function is as follows. Catalyzes the hydroxylation of 2-nonaprenyl-3-methyl-6-methoxy-1,4-benzoquinol during ubiquinone biosynthesis. The chain is 3-demethoxyubiquinol 3-hydroxylase from Francisella philomiragia subsp. philomiragia (strain ATCC 25017 / CCUG 19701 / FSC 153 / O#319-036).